The chain runs to 296 residues: Methylsterol monooxygenase erg25B (296 aa).

3 helical membrane-spanning segments follow: residues 50 to 70 (IMSF…WILI), 98 to 118 (FVLL…HPMA), and 125 to 145 (TSVP…FFVL). The Fatty acid hydroxylase domain maps to 140–276 (AIFFVLEDTW…FRWWDYLLDT (137 aa)). Residues 154-158 (HRALH) carry the Histidine box-1 motif. The short motif at 167 to 171 (HKIHH) is the Histidine box-2 element. A helical membrane pass occupies residues 201-221 (ILWCALTGDLHIFTMYVWIVL). The Histidine box-3 signature appears at 251 to 257 (HHDLHHE).

Belongs to the sterol desaturase family. The cofactor is Fe cation.

It is found in the endoplasmic reticulum membrane. It functions in the pathway steroid metabolism; ergosterol biosynthesis. In terms of biological role, sterol-C4-methyl oxidase; part of the third module of ergosterol biosynthesis pathway that includes the late steps of the pathway. Erg25B is a catalytic component of the C-4 demethylation complex that catalyzes the conversion of 4,4-dimethylfecosterol into fecosterol via 4-methylfecosterol. The third module or late pathway involves the ergosterol synthesis itself through consecutive reactions that mainly occur in the endoplasmic reticulum (ER) membrane. Firstly, the squalene synthase erg9 catalyzes the condensation of 2 farnesyl pyrophosphate moieties to form squalene, which is the precursor of all steroids. Squalene synthase is crucial for balancing the incorporation of farnesyl diphosphate (FPP) into sterol and nonsterol isoprene synthesis. Secondly, squalene is converted into lanosterol by the consecutive action of the squalene epoxidase erg1 and the lanosterol synthase erg7. Then, the delta(24)-sterol C-methyltransferase erg6 methylates lanosterol at C-24 to produce eburicol. Eburicol is the substrate of the sterol 14-alpha demethylase encoded by cyp51A and cyp51B, to yield 4,4,24-trimethyl ergosta-8,14,24(28)-trienol. The C-14 reductase erg24 then reduces the C14=C15 double bond which leads to 4,4-dimethylfecosterol. A sequence of further demethylations at C-4, involving the C-4 demethylation complex containing the C-4 methylsterol oxidases erg25A or erg25B, the sterol-4-alpha-carboxylate 3-dehydrogenase erg26 and the 3-keto-steroid reductase erg27, leads to the production of fecosterol via 4-methylfecosterol. The C-8 sterol isomerase erg2 then catalyzes the reaction which results in unsaturation at C-7 in the B ring of sterols and thus converts fecosterol to episterol. The sterol-C5-desaturase erg3B then catalyzes the introduction of a C-5 double bond in the B ring to produce 5-dehydroepisterol. The 2 other sterol-C5-desaturases, erg3A and erg3C, seem to be less important in ergosterol biosynthesis. The C-22 sterol desaturase erg5 further converts 5-dehydroepisterol into ergosta-5,7,22,24(28)-tetraen-3beta-ol by forming the C-22(23) double bond in the sterol side chain. Finally, ergosta-5,7,22,24(28)-tetraen-3beta-ol is substrate of the C-24(28) sterol reductases erg4A and erg4B to produce ergosterol. Possible alternative sterol biosynthetic pathways might exist from fecosterol to ergosterol, depending on the activities of the erg3 isoforms. This is Methylsterol monooxygenase erg25B from Aspergillus fumigatus (strain ATCC MYA-4609 / CBS 101355 / FGSC A1100 / Af293) (Neosartorya fumigata).